We begin with the raw amino-acid sequence, 397 residues long: Homeobox protein knotted-1-like 2 (397 aa).

Disordered regions lie at residues 43–68, 172–191, and 233–276; these read TFHL…SPGT, FEAR…DPEL, and NNNA…PRAE. Gly residues predominate over residues 49–58; sequence SGGGGGGGSG. The 21-residue stretch at 279–299 folds into the ELK domain; sequence ELKNHLLRKYSGYLSSLKQEL. A DNA-binding region (homeobox; TALE-type) is located at residues 300–363; that stretch reads SKKKKKGKLP…NQRKRHWKPS (64 aa).

It belongs to the TALE/KNOX homeobox family. Expressed only in the stems.

The protein resides in the nucleus. Its function is as follows. Probably binds to the DNA sequence 5'-TGAC-3'. This is Homeobox protein knotted-1-like 2 from Malus domestica (Apple).